We begin with the raw amino-acid sequence, 123 residues long: Small ribosomal subunit protein uS12 (123 aa).

Asp-89 is subject to 3-methylthioaspartic acid.

It belongs to the universal ribosomal protein uS12 family. In terms of assembly, part of the 30S ribosomal subunit. Contacts proteins S8 and S17. May interact with IF1 in the 30S initiation complex.

In terms of biological role, with S4 and S5 plays an important role in translational accuracy. Functionally, interacts with and stabilizes bases of the 16S rRNA that are involved in tRNA selection in the A site and with the mRNA backbone. Located at the interface of the 30S and 50S subunits, it traverses the body of the 30S subunit contacting proteins on the other side and probably holding the rRNA structure together. The combined cluster of proteins S8, S12 and S17 appears to hold together the shoulder and platform of the 30S subunit. This Methylobacterium nodulans (strain LMG 21967 / CNCM I-2342 / ORS 2060) protein is Small ribosomal subunit protein uS12.